A 210-amino-acid polypeptide reads, in one-letter code: ATP-dependent Clp protease proteolytic subunit (210 aa).

The active-site Nucleophile is the serine 106. Residue histidine 131 is part of the active site.

The protein belongs to the peptidase S14 family. As to quaternary structure, fourteen ClpP subunits assemble into 2 heptameric rings which stack back to back to give a disk-like structure with a central cavity, resembling the structure of eukaryotic proteasomes.

It is found in the cytoplasm. The enzyme catalyses Hydrolysis of proteins to small peptides in the presence of ATP and magnesium. alpha-casein is the usual test substrate. In the absence of ATP, only oligopeptides shorter than five residues are hydrolyzed (such as succinyl-Leu-Tyr-|-NHMec, and Leu-Tyr-Leu-|-Tyr-Trp, in which cleavage of the -Tyr-|-Leu- and -Tyr-|-Trp bonds also occurs).. Its function is as follows. Cleaves peptides in various proteins in a process that requires ATP hydrolysis. Has a chymotrypsin-like activity. Plays a major role in the degradation of misfolded proteins. The sequence is that of ATP-dependent Clp protease proteolytic subunit from Bradyrhizobium sp. (strain BTAi1 / ATCC BAA-1182).